Reading from the N-terminus, the 231-residue chain is 7-cyano-7-deazaguanine synthase (231 aa).

8-18 (FSGGQDSTTCL) lines the ATP pocket. Residues Cys-188, Cys-197, Cys-200, and Cys-203 each contribute to the Zn(2+) site.

This sequence belongs to the QueC family. It depends on Zn(2+) as a cofactor.

The catalysed reaction is 7-carboxy-7-deazaguanine + NH4(+) + ATP = 7-cyano-7-deazaguanine + ADP + phosphate + H2O + H(+). The protein operates within purine metabolism; 7-cyano-7-deazaguanine biosynthesis. Its function is as follows. Catalyzes the ATP-dependent conversion of 7-carboxy-7-deazaguanine (CDG) to 7-cyano-7-deazaguanine (preQ(0)). This Salmonella choleraesuis (strain SC-B67) protein is 7-cyano-7-deazaguanine synthase.